Here is a 209-residue protein sequence, read N- to C-terminus: Mei4-dependent protein 1 (209 aa).

A signal peptide spans 1-22 (MLHATQLCYLLLFCFLPISISS).

The protein resides in the secreted. The protein is Mei4-dependent protein 1 (mde1) of Schizosaccharomyces pombe (strain 972 / ATCC 24843) (Fission yeast).